The following is a 209-amino-acid chain: Ras-related protein Rab-2-A (209 aa).

Residue G13 to C21 coordinates GTP. Positions H35–F43 match the Effector region motif. Residues D61–Q65, N119–D122, and S149–K151 contribute to the GTP site. 2 S-geranylgeranyl cysteine lipidation sites follow: C207 and C208.

This sequence belongs to the small GTPase superfamily. Rab family.

It is found in the endoplasmic reticulum membrane. The protein localises to the golgi apparatus membrane. Functionally, protein transport. Probably involved in vesicular traffic. The protein is Ras-related protein Rab-2-A (RAB2A) of Zea mays (Maize).